Consider the following 37-residue polypeptide: Potassium channel toxin alpha-KTx 11.2 (37 aa).

Intrachain disulfides connect cysteine 8/cysteine 27, cysteine 13/cysteine 33, and cysteine 17/cysteine 35.

Belongs to the short scorpion toxin superfamily. Potassium channel inhibitor family. Alpha-KTx 11 subfamily. Expressed by the venom gland.

The protein localises to the secreted. In terms of biological role, binds and inhibits voltage-sensitive potassium channels. Inhibits the vertebrate potassium channel Kv1.1/KCNA1 with low affinity. This is Potassium channel toxin alpha-KTx 11.2 from Parabuthus villosus (Black hairy thick-tailed scorpion).